A 902-amino-acid chain; its full sequence is MPPASTSTTNDMITEEPTSPHQIPRLTRRLTGFLPQEIKSIDTMIPLKSRALWNKHQVKKFNKAEDFQDRFIDHVETTLARSLYNCDDMAAYEAASMSIRDNLVIDWNKTQQKFTTRDPKRVYYLSLEFLMGRALDNALINMKIEDPEDPAASKGKPREMIKGALDDLGFKLEDVLDQEPDAGLGNGGLGRLAACFVDSMATEGIPAWGYGLRYEYGIFAQKIIDGYQVETPDYWLNSGNPWEIERNEVQIPVTFYGYVDRPEGGKTTLSASQWIGGERVLAVAYDFPVPGFKTSNVNNLRLWQARPTTEFDFAKFNNGDYKNSVAQQQRAESITAVLYPNDNFAQGKELRLKQQYFWCAASLHDILRRFKKSKRPWTEFPDQVAIQLNDTHPTLAIVELQRVLVDLEKLDWHEAWDIVTKTFAYTNHTVMQEALEKWPVGLFGHLLPRHLEIIYDINWFFLQDVAKKFPKDVDLLSRISIIEENSPERQIRMAFLAIVGSHKVNGVAELHSELIKTTIFKDFVKFYGPSKFVNVTNGITPRRWLKQANPSLAKLISETLNDPTEEYLLDMAKLTQLGKYVEDKEFLKKWNQVKLNNKIRLVDLIKKENDGVDIINREYLDDTLFDMQVKRIHEYKRQQLNVFGIIYRYLAMKNMLKNGASIEEVAKKYPRKVSIFGGKSAPGYYMAKLIIKLINCVADIVNNDESIEHLLKVVFVADYNVSKAEIIIPASDLSEHISTAGTEASGTSNMKFVMNGGLIIGTVDGANVEITREIGEDNVFLFGNLSENVEELRYNHQYHPQDLPSSLDSVLSYIESGQFSPENPNEFKPLVDSIKYHGDYYLVSDDFESYLATHELVDQEFHNQRSEWLKKSVLSVANVGFFSSDRCIEEYSDTIWNVEPVT.

Positions M1 to H21 are disordered. Position 31 is a phosphothreonine (T31). At S333 the chain carries Phosphoserine. N6-(pyridoxal phosphate)lysine is present on K751.

It belongs to the glycogen phosphorylase family. In terms of assembly, homodimer. Pyridoxal 5'-phosphate serves as cofactor.

It localises to the cytoplasm. The protein resides in the cytosol. The catalysed reaction is [(1-&gt;4)-alpha-D-glucosyl](n) + phosphate = [(1-&gt;4)-alpha-D-glucosyl](n-1) + alpha-D-glucose 1-phosphate. With respect to regulation, activated by phosphorylation of Thr-31. In terms of biological role, phosphorylase is an important allosteric enzyme in carbohydrate metabolism. Enzymes from different sources differ in their regulatory mechanisms and in their natural substrates. However, all known phosphorylases share catalytic and structural properties. This chain is Glycogen phosphorylase (GPH1), found in Saccharomyces cerevisiae (strain ATCC 204508 / S288c) (Baker's yeast).